A 247-amino-acid chain; its full sequence is tRNA (guanine-N(1)-)-methyltransferase (247 aa).

S-adenosyl-L-methionine-binding positions include Gly-115 and 135–140; that span reads IGDYVL.

This sequence belongs to the RNA methyltransferase TrmD family. Homodimer.

The protein resides in the cytoplasm. It carries out the reaction guanosine(37) in tRNA + S-adenosyl-L-methionine = N(1)-methylguanosine(37) in tRNA + S-adenosyl-L-homocysteine + H(+). Specifically methylates guanosine-37 in various tRNAs. The chain is tRNA (guanine-N(1)-)-methyltransferase from Alkaliphilus metalliredigens (strain QYMF).